The primary structure comprises 1072 residues: Carbamoyl phosphate synthase large chain (1072 aa).

The tract at residues 1 to 401 (MPKRLDINTI…SLLKAVRSLE (401 aa)) is carboxyphosphate synthetic domain. R129, R169, G175, G176, K208, I210, E215, G241, V242, H243, Q284, and E298 together coordinate ATP. Residues 133-327 (RTLMQDLNEP…IAKLAAKIAV (195 aa)) enclose the ATP-grasp 1 domain. Residues Q284, E298, and N300 each contribute to the Mg(2+) site. The Mn(2+) site is built by Q284, E298, and N300. An oligomerization domain region spans residues 402–546 (LGIYHLELDH…YSTYADENES (145 aa)). The carbamoyl phosphate synthetic domain stretch occupies residues 547–929 (IVTDRKSVVV…ALYKGLVASG (383 aa)). Residues 671–861 (EAALTKLGIP…MANVATKVIL (191 aa)) enclose the ATP-grasp 2 domain. Residues R707, R746, E752, G777, V778, H779, S780, Q820, and E832 each contribute to the ATP site. Positions 820, 832, and 834 each coordinate Mg(2+). The Mn(2+) site is built by Q820, E832, and N834. In terms of domain architecture, MGS-like spans 930 to 1072 (INIPTHGSVI…QTKRHEVVHA (143 aa)). The allosteric domain stretch occupies residues 930-1072 (INIPTHGSVI…QTKRHEVVHA (143 aa)).

The protein belongs to the CarB family. In terms of assembly, composed of two chains; the small (or glutamine) chain promotes the hydrolysis of glutamine to ammonia, which is used by the large (or ammonia) chain to synthesize carbamoyl phosphate. Tetramer of heterodimers (alpha,beta)4. The cofactor is Mg(2+). Mn(2+) serves as cofactor.

It catalyses the reaction hydrogencarbonate + L-glutamine + 2 ATP + H2O = carbamoyl phosphate + L-glutamate + 2 ADP + phosphate + 2 H(+). It carries out the reaction hydrogencarbonate + NH4(+) + 2 ATP = carbamoyl phosphate + 2 ADP + phosphate + 2 H(+). The protein operates within amino-acid biosynthesis; L-arginine biosynthesis; carbamoyl phosphate from bicarbonate: step 1/1. Its pathway is pyrimidine metabolism; UMP biosynthesis via de novo pathway; (S)-dihydroorotate from bicarbonate: step 1/3. Its function is as follows. Large subunit of the glutamine-dependent carbamoyl phosphate synthetase (CPSase). CPSase catalyzes the formation of carbamoyl phosphate from the ammonia moiety of glutamine, carbonate, and phosphate donated by ATP, constituting the first step of 2 biosynthetic pathways, one leading to arginine and/or urea and the other to pyrimidine nucleotides. The large subunit (synthetase) binds the substrates ammonia (free or transferred from glutamine from the small subunit), hydrogencarbonate and ATP and carries out an ATP-coupled ligase reaction, activating hydrogencarbonate by forming carboxy phosphate which reacts with ammonia to form carbamoyl phosphate. This Bacillus cereus (strain ATCC 14579 / DSM 31 / CCUG 7414 / JCM 2152 / NBRC 15305 / NCIMB 9373 / NCTC 2599 / NRRL B-3711) protein is Carbamoyl phosphate synthase large chain.